Consider the following 357-residue polypeptide: U5 small nuclear ribonucleoprotein 40 kDa protein (357 aa).

A Glycyl lysine isopeptide (Lys-Gly) (interchain with G-Cter in SUMO2) cross-link involves residue K18. An Asymmetric dimethylarginine modification is found at R21. 7 WD repeats span residues 64-103, 107-146, 149-189, 191-230, 233-272, 283-322, and 325-357; these read GHEG…DNYA, GHSG…RVKR, GHTS…AIQT, QNTY…LTYT, GHAD…PKER, NFEK…ILYK, and GHAG…GEIQ. K270 is covalently cross-linked (Glycyl lysine isopeptide (Lys-Gly) (interchain with G-Cter in SUMO2)).

In terms of assembly, component of the pre-catalytic and catalytic spliceosome complexes. Component of the postcatalytic spliceosome P complex. Part of the U5 snRNP complex. Interacts with PRPF8. Component of the U4/U6-U5 tri-snRNP complex composed of the U4, U6 and U5 snRNAs and at least PRPF3, PRPF4, PRPF6, PRPF8, PRPF31, SNRNP200, TXNL4A, WDR57, SNRNP40, DDX23, CD2BP2, PPIH, SNU13, EFTUD2, SART1 and USP39. Component of the minor spliceosome, which splices U12-type introns.

It localises to the nucleus. Functionally, required for pre-mRNA splicing as component of the activated spliceosome. Component of the U5 small nuclear ribonucleoprotein (snRNP) complex and the U4/U6-U5 tri-snRNP complex, building blocks of the spliceosome. As a component of the minor spliceosome, involved in the splicing of U12-type introns in pre-mRNAs. The polypeptide is U5 small nuclear ribonucleoprotein 40 kDa protein (SNRNP40) (Homo sapiens (Human)).